The following is a 237-amino-acid chain: Splicing factor U2AF 35 kDa subunit (237 aa).

At Ala-2 the chain carries N-acetylalanine. A C3H1-type 1 zinc finger spans residues 12–40 (EKDKVNCSFYFKIGACRHGDRCSRLHNKP). Lys-39 carries the N6-methyllysine modification. 2 positions are modified to phosphoserine: Ser-61 and Ser-145. The RRM domain occupies 65 to 147 (LRCAVSDVEM…QPIHAELSPV (83 aa)). A C3H1-type 2 zinc finger spans residues 149–176 (DFREACCRQYEMGECTRGGFCNFMHLKP). An Omega-N-methylarginine modification is found at Arg-165. The segment at 185–237 (LYGRRRKKHRSRSRSRERRSRSRDRGRGGGGGGGGGRERDRRRSRDRERSGRF) is disordered. The span at 188 to 208 (RRRKKHRSRSRSRERRSRSRD) shows a compositional bias: basic residues. A compositionally biased stretch (basic and acidic residues) spans 220–237 (GRERDRRRSRDRERSGRF).

It belongs to the splicing factor SR family. As to quaternary structure, identified in the spliceosome C complex. Heterodimer with U2AF2. Interacts (via RS domain) with PHF5A (via N-terminus). Interacts with ZRANB2. Interacts with SDE2. Interacts with SF3B1.

Its subcellular location is the nucleus. The protein resides in the nucleus speckle. In terms of biological role, plays a critical role in both constitutive and enhancer-dependent splicing by mediating protein-protein interactions and protein-RNA interactions required for accurate 3'-splice site selection. Recruits U2 snRNP to the branch point. Directly mediates interactions between U2AF2 and proteins bound to the enhancers and thus may function as a bridge between U2AF2 and the enhancer complex to recruit it to the adjacent intron. In Bos taurus (Bovine), this protein is Splicing factor U2AF 35 kDa subunit (U2AF1).